Consider the following 258-residue polypeptide: UDP-N-acetylenolpyruvoylglucosamine reductase (258 aa).

The active site involves arginine 142. Serine 184 acts as the Proton donor in catalysis. The active site involves glutamate 254.

The protein belongs to the MurB family. FAD is required as a cofactor.

Its subcellular location is the cytoplasm. The catalysed reaction is UDP-N-acetyl-alpha-D-muramate + NADP(+) = UDP-N-acetyl-3-O-(1-carboxyvinyl)-alpha-D-glucosamine + NADPH + H(+). Its pathway is cell wall biogenesis; peptidoglycan biosynthesis. In terms of biological role, cell wall formation. In Campylobacter jejuni (strain RM1221), this protein is UDP-N-acetylenolpyruvoylglucosamine reductase.